A 203-amino-acid polypeptide reads, in one-letter code: Venom allergen 5 (203 aa).

Intrachain disulfides connect Cys4–Cys15, Cys7–Cys100, Cys25–Cys93, and Cys169–Cys186. In terms of domain architecture, SCP spans 45 to 188; it reads KRHNEFRQKV…WHTHYLVCNY (144 aa).

The protein belongs to the CRISP family. Venom allergen 5-like subfamily. As to expression, expressed by the venom gland.

It localises to the secreted. The sequence is that of Venom allergen 5 from Dolichovespula arenaria (Yellow hornet).